We begin with the raw amino-acid sequence, 3095 residues long: Centrosome-associated protein 350 (3095 aa).

2 disordered regions span residues 1–24 and 63–105; these read MRSSKSKEVPLPNPRNSQSKETIQ and TKKS…RSPL. Residues 14-24 show a composition bias toward polar residues; that stretch reads PRNSQSKETIQ. A phosphoserine mark is found at S84 and S140. 3 disordered regions span residues 219 to 239, 251 to 272, and 430 to 493; these read DEMPNRTKGSENNSKPSLNNM, SDSSPSSSACNSQRSDISKRQQ, and KILG…RAWS. The segment covering 228–238 has biased composition (polar residues); it reads SENNSKPSLNN. Low complexity predominate over residues 251 to 265; the sequence is SDSSPSSSACNSQRS. 2 stretches are compositionally biased toward basic and acidic residues: residues 438–457 and 464–476; these read MEQKERRPTSNDRSGRERVA and GRAESDPKLDVSH. Residue S468 is modified to Phosphoserine. The span at 481–491 shows a compositional bias: low complexity; that stretch reads RSSARSRSSRA. The residue at position 503 (S503) is a Phosphoserine. 2 disordered regions span residues 538–623 and 671–718; these read QAVR…QKNK and ARQH…PPQP. Composition is skewed to basic and acidic residues over residues 587–623 and 690–699; these read YDTDEVRQYIVRQQEERRRRQHEEKKAQKEATEQKNK and ESDKENKIQE. The stretch at 596 to 641 forms a coiled coil; sequence IVRQQEERRRRQHEEKKAQKEATEQKNKRLQELYRRQREAFSKAKT. S691 is modified (phosphoserine). The segment covering 701 to 714 has biased composition (low complexity); that stretch reads PPSASSSSDLSLSE. S874 and S935 each carry phosphoserine. The segment at 977 to 996 is disordered; the sequence is SVSEGPLLSEGSLSEEEERR. Positions 979–988 are enriched in low complexity; the sequence is SEGPLLSEGS. Residue S1057 is modified to Phosphoserine. Disordered regions lie at residues 1099–1128 and 1151–1265; these read YEDDFVSSPGSGTLTERKSTLESQVDGSSL and QHSS…SQKL. Positions 1119-1128 are enriched in polar residues; it reads LESQVDGSSL. Residues 1153-1168 show a composition bias toward low complexity; sequence SSGARSAGSTRSSSAS. The span at 1194 to 1206 shows a compositional bias: basic and acidic residues; the sequence is DEEKVQSDSERGS. Position 1200 is a phosphoserine (S1200). The span at 1251–1265 shows a compositional bias: low complexity; it reads QKTPTSPLSPSSQKL. T1253 is modified (phosphothreonine). Residues S1256 and S1259 each carry the phosphoserine modification. Residues 1363-1402 are a coiled coil; it reads IKAQQQRHERDLALLKLKAEQEALECQRQLEETRNKTAQV. 4 disordered regions span residues 1490-1668, 1720-1739, 1787-1864, and 1893-2017; these read AETD…GQDS, LRDKGEDDKMPPLRKKQRGL, KLKS…QRRQ, and AWDK…PVKS. Residues 1503–1513 show a composition bias toward basic and acidic residues; that stretch reads QSKEGAVDSKR. Composition is skewed to low complexity over residues 1517–1526 and 1536–1545; these read SPSRDSYSES and SSGSSRQDSP. Basic and acidic residues predominate over residues 1551–1564; sequence KENEKPFHGEKMES. Position 1606 is a phosphoserine (S1606). Basic and acidic residues predominate over residues 1624–1640; that stretch reads ESHRRFNMEKKRGHHDD. S1641 and S1646 each carry phosphoserine. Positions 1700–1793 form a coiled coil; the sequence is KALKEKTKAE…LQEKLKSAGE (94 aa). Residues 1787 to 1796 are compositionally biased toward basic and acidic residues; sequence KLKSAGEKKL. A Phosphoserine modification is found at S1812. The segment covering 1819–1835 has biased composition (low complexity); sequence ETRSPSPISISSSETSS. 2 stretches are compositionally biased toward basic and acidic residues: residues 1845-1864 and 1894-1915; these read SRMDEKFLTKREQKLMQRRQ and WDKELVKPRTPKKEQESQRTEQ. Positions 1850–1893 form a coiled coil; it reads KFLTKREQKLMQRRQHAEELLEWKRRLDAEEAEIQQMEKQALAA. S1930 is modified (phosphoserine). Over residues 1980 to 1994 the composition is skewed to low complexity; the sequence is STSPSKHSPPKSCLS. A compositionally biased stretch (basic and acidic residues) spans 1999 to 2011; that stretch reads ESSKASHRTEGHC. Residues 2043-2092 are a coiled coil; it reads IEGRIRALKDELRKRKSVVEQLKREQRKRQKERLKAQEASLLRQLETYDE. Phosphoserine is present on S2108. Disordered stretches follow at residues 2116 to 2155, 2191 to 2265, 2286 to 2427, and 2440 to 2471; these read KTLSSVSEKPKIKPHPLHRSETAKTWKSVTESERSRGSLA, IEHL…VEDA, LSSK…EISE, and VHSERLLELRSPTELMKSKERSDVGHEQGGTE. Positions 2133–2151 are enriched in basic and acidic residues; sequence HRSETAKTWKSVTESERSR. Phosphoserine is present on S2198. Composition is skewed to basic and acidic residues over residues 2202-2214 and 2227-2259; these read SSRKAQTESRDSL and NAPDRIYDVSEAKAEDTSQKSEIQEIESMKLES. Positions 2286-2300 are enriched in polar residues; it reads LSSKELPSDSANVQQ. Over residues 2301 to 2331 the composition is skewed to basic and acidic residues; that stretch reads DLDKPATETSHEKEEALKEDQSNHSTDDRSP. Polar residues predominate over residues 2349 to 2362; the sequence is DSTCSGQLSVPKES. Basic and acidic residues-rich tracts occupy residues 2377–2387 and 2395–2407; these read ISADEISKDDS and LRKDSQSHRDRSQ. Residues 2409 to 2420 show a composition bias toward low complexity; it reads TRSSRSRATGSG. Residues S2421 and S2450 each carry the phosphoserine modification. Residues 2455–2465 are compositionally biased toward basic and acidic residues; that stretch reads MKSKERSDVGH. The CAP-Gly domain occupies 2504–2546; that stretch reads GETDFAKGFWAGVELDKPEGNNNGTYDGIVYFVCKDKHGIFAP. T2671 is modified (phosphothreonine). Residues 2700-2731 are a coiled coil; it reads LLDLLTREKNQLEAQLKSSISEEKKSKQQLET. Residues 2767 to 2793 form a disordered region; it reads QEFLDQKKVPPQDLPQNTEEQSPSVPS. The segment covering 2780 to 2791 has biased composition (polar residues); sequence LPQNTEEQSPSV. Phosphoserine is present on residues S2809 and S2818.

In terms of assembly, part of a ternary complex that contains CEP350, CEP43 and MAPRE1. Interacts (via C-terminus) directly with CEP43 (via N-terminus). Interacts with NR1H3, PPARA, PPARD and PPARG. Interacts directly with microtubules. Interacts with the fusion protein CEP43-FGFR1, and by doing so recruits and activates PI3K and PLC-gamma. Interacts with CYLD. Interacts with CFAP157. Interacts with CEP19 (via C-terminus). Interacts with CEP78; promoting CEP78 localization to centrosome and centriole. In terms of processing, phosphorylated during mitosis.

The protein localises to the cytoplasm. It is found in the cytoskeleton. It localises to the microtubule organizing center. Its subcellular location is the centrosome. The protein resides in the spindle. The protein localises to the nucleus. It is found in the centriole. It localises to the cilium basal body. In terms of biological role, plays an essential role in centriole growth by stabilizing a procentriolar seed composed of at least, SASS6 and CPAP. Required for anchoring microtubules to the centrosomes and for the integrity of the microtubule network. Recruits PPARA to discrete subcellular compartments and thereby modulates PPARA activity. Required for ciliation. This is Centrosome-associated protein 350 from Mus musculus (Mouse).